The following is a 157-amino-acid chain: Peptide methionine sulfoxide reductase MsrA (157 aa).

Residue Cys-13 is part of the active site.

This sequence belongs to the MsrA Met sulfoxide reductase family.

It catalyses the reaction L-methionyl-[protein] + [thioredoxin]-disulfide + H2O = L-methionyl-(S)-S-oxide-[protein] + [thioredoxin]-dithiol. It carries out the reaction [thioredoxin]-disulfide + L-methionine + H2O = L-methionine (S)-S-oxide + [thioredoxin]-dithiol. In terms of biological role, has an important function as a repair enzyme for proteins that have been inactivated by oxidation. Catalyzes the reversible oxidation-reduction of methionine sulfoxide in proteins to methionine. The sequence is that of Peptide methionine sulfoxide reductase MsrA from Methanococcus maripaludis (strain C6 / ATCC BAA-1332).